A 449-amino-acid chain; its full sequence is Protein tweety homolog 1-A (449 aa).

Residues 1-43 are Extracellular-facing; sequence MSTSHGYRASWWTNILHQVPHTNFQFEVVDNQFAPQEWPYQQA. Residues 44–64 form a helical membrane-spanning segment; that stretch reads LLFLASIAGLCLAISLILICV. Over 65–86 the chain is Cytoplasmic; the sequence is YLIRFCCCASQEDDDSKNHRVC. A helical transmembrane segment spans residues 87 to 107; it reads CVTWSCVAAVIICCAGIGIGF. The Extracellular segment spans residues 108–212; the sequence is YGNSETNDGV…QVNFIEDYRW (105 aa). Residue Asn128 is glycosylated (N-linked (GlcNAc...) asparagine). Residues 213–233 form a helical membrane-spanning segment; the sequence is LAYILLLLLDLIICLFTLLGL. The Cytoplasmic segment spans residues 234 to 238; sequence AKRIK. Residues 239-259 form a helical membrane-spanning segment; sequence WLVIVMTVVSFFVLLLSWGSM. The Extracellular portion of the chain corresponds to 260–388; that stretch reads GLEMATAVGL…LKGLCYDGME (129 aa). Intrachain disulfides connect Cys273/Cys383 and Cys301/Cys368. N-linked (GlcNAc...) asparagine glycosylation is found at Asn282 and Asn353. A helical transmembrane segment spans residues 389–409; sequence GILFLLLFSFLSALSFTAAVC. Topologically, residues 410–449 are cytoplasmic; that stretch reads SLPRAWKRFQNRDLDYDDMDEDDPFNPQESKRFVQWQSSI.

This sequence belongs to the tweety family. Homotetramer; disulfide-linked. Homodimer.

It is found in the cell membrane. It carries out the reaction chloride(in) = chloride(out). The enzyme catalyses L-glutamate(out) = L-glutamate(in). In terms of biological role, may act as a calcium-independent, swelling-dependent volume-regulated anion channel (VRAC-swell) which plays a pivotal role in the process of regulatory volume decrease (RVD) in the brain through the efflux of anions like chloride and organic osmolytes like glutamate. This Xenopus laevis (African clawed frog) protein is Protein tweety homolog 1-A (ttyh1-a).